Reading from the N-terminus, the 352-residue chain is Divinyl chlorophyll a/b light-harvesting protein PcbH (352 aa).

6 consecutive transmembrane segments (helical) span residues 27–47 (FIGSHVGHTGIICFATGASCL), 88–108 (VATIAIFHLIFSMVYGGAGLA), 140–160 (FILGHHLIFLGVANIWFVEWA), 202–222 (VMSGHAFLAFLQISGGAFHIA), 242–262 (AVLSWSLAGLFLMGVVAAFWA), and 309–329 (LVNVQYYFAFFCLQGHLWHAL).

It belongs to the PsbB/PsbC family. IsiA/Pcb subfamily. The antenna complex consists of divinyl chlorophylls (a and b) and divinyl chlorophyll a/b binding proteins and binds more divinyl chlorophyll b than does the antenna complex from high-light-adapted Prochlorococcus. Divinyl chlorophyll a is required as a cofactor. Divinyl chlorophyll b serves as cofactor.

The protein localises to the cellular thylakoid membrane. The antenna complex functions as a light receptor, it captures and delivers excitation energy to photosystems II and I. The Prochlorales pcb genes are not related to higher plant LHCs. The sequence is that of Divinyl chlorophyll a/b light-harvesting protein PcbH (pcbH) from Prochlorococcus marinus (strain SARG / CCMP1375 / SS120).